The primary structure comprises 377 residues: UDP-N-acetylenolpyruvoylglucosamine reductase (377 aa).

One can recognise an FAD-binding PCMH-type domain in the interval 48-215; sequence LGGTPMAAVR…LGITLQLHTD (168 aa). The active site involves arginine 193. The Proton donor role is filled by serine 268. Glutamate 369 is an active-site residue.

It belongs to the MurB family. FAD is required as a cofactor.

It localises to the cytoplasm. It carries out the reaction UDP-N-acetyl-alpha-D-muramate + NADP(+) = UDP-N-acetyl-3-O-(1-carboxyvinyl)-alpha-D-glucosamine + NADPH + H(+). The protein operates within cell wall biogenesis; peptidoglycan biosynthesis. Cell wall formation. The sequence is that of UDP-N-acetylenolpyruvoylglucosamine reductase from Corynebacterium diphtheriae (strain ATCC 700971 / NCTC 13129 / Biotype gravis).